The primary structure comprises 185 residues: Photosystem I assembly protein Ycf4 (185 aa).

The next 3 helical transmembrane spans lie at 22–42, 57–77, and 101–121; these read FFFA…GFSS, ILFV…LFFS, and FYVF…LRVP.

It belongs to the Ycf4 family.

Its subcellular location is the plastid. It is found in the chloroplast thylakoid membrane. Its function is as follows. Seems to be required for the assembly of the photosystem I complex. In Gnetum parvifolium (Small-leaved jointfir), this protein is Photosystem I assembly protein Ycf4.